The following is a 38-amino-acid chain: Large ribosomal subunit protein bL36 (38 aa).

Belongs to the bacterial ribosomal protein bL36 family.

The protein is Large ribosomal subunit protein bL36 of Flavobacterium psychrophilum (strain ATCC 49511 / DSM 21280 / CIP 103535 / JIP02/86).